Consider the following 813-residue polypeptide: LPS-assembly protein LptD (813 aa).

Positions 1-22 are cleaved as a signal peptide; that stretch reads MRRALRLLPLPLSIAICLPAMA.

The protein belongs to the LptD family. Component of the lipopolysaccharide transport and assembly complex. Interacts with LptE and LptA.

Its subcellular location is the cell outer membrane. Its function is as follows. Together with LptE, is involved in the assembly of lipopolysaccharide (LPS) at the surface of the outer membrane. In Xanthomonas oryzae pv. oryzae (strain KACC10331 / KXO85), this protein is LPS-assembly protein LptD.